A 399-amino-acid chain; its full sequence is MSTRHDRIWVGIDAGKGHHWAVAVDADGETLFSTKVINDEAQVLTLIETAREREEVRWAVDISGRASTLLLALLVAHGQNVVYVPGRTVNRMSGAYKGEGKTDAKDARVIADQARMRRDFAPLDRPPELVTTLRLLTNHRADLIADRVRLINRLRDLLTGICPALERAFDYSAAKGPVVMLTEYQTPAALRRTGVKRLTTWLGRRKVRDADTVAAKAIEAARTQQVVLPGEKRATKLVCDLAHQLLALDERIKDNDREIRETFRTDDRAEIIESMPGMGPVLGAEFVAIVGDLSGYKDAGRLASHAGLAPVPRDSGRRTGNYHRPQRYNRRLRWLFYMSAQTAMMRPGPSRDYYLKKRGEGLLHTQALLSLARRRVDVLWAMLRDKRLFTPAPPVTQTA.

Belongs to the transposase IS1111A/IS1328/IS1533 family.

The polypeptide is Insertion element IS116 uncharacterized 44.8 kDa protein (Streptomyces clavuligerus).